Here is an 893-residue protein sequence, read N- to C-terminus: MSSKKNRKRLNQSAENGSSLPSAASSCAEARAPSAGSDFAATSGTLTVTNLLEKVDDKIPKTFQNSLIHLGLNTMKSANICIGRPVLLTSLNGKQEVYTAWPMAGFPGGKVGLSEMAQKNVGVRPGDAIQVQPLVGAVLQAEEMDVALSDKDMEINEEELTGCILRKLDGKIVLPGNFLYCTFYGRPYKLQVLRVKGADGMILGGPQSDSDTDAQRMAFEQSSMETSSLELSLQLSQLDLEDTQIPTSRSTPYKPIDDRITNKASDVLLDVTQSPGDGSGLMLEEVTGLKCNFESAREGNEQLTEEERLLKFSIGAKCNTDTFYFISSTTRVNFTEIDKNSKEQDNQFKVTYDMIGGLSSQLKAIREIIELPLKQPELFKSYGIPAPRGVLLYGPPGTGKTMIARAVANEVGAYVSVINGPEIISKFYGETEAKLRQIFAEATLRHPSIIFIDELDALCPKREGAQNEVEKRVVASLLTLMDGIGSEVSEGQVLVLGATNRPHALDAALRRPGRFDKEIEIGVPNAQDRLDILQKLLRRVPHLLTEAELLQLANSAHGYVGADLKVLCNEAGLCALRRILKKQPNLPDVKVAGLVKITLKDFLQAMNDIRPSAMREIAIDVPNVSWSDIGGLESIKLKLEQAVEWPLKHPESFIRMGIQPPKGVLLYGPPGCSKTMIAKALANESGLNFLAIKGPELMNKYVGESERAVRETFRKARAVAPSIIFFDELDALAVERGSSLGAGNVADRVLAQLLTEMDGIEQLKDVTILAATNRPDRIDKALMRPGRIDRIIYVPLPDAATRREIFKLQFHSMPVSNEVDLDELILQTDAYSGAEIVAVCREAALLALEEDIQANLIMKRHFTQALSTVTPRIPESLRRFYEDYQEKSGLHTL.

Residues 1 to 10 (MSSKKNRKRL) show a composition bias toward basic residues. The disordered stretch occupies residues 1 to 26 (MSSKKNRKRLNQSAENGSSLPSAASS). The required for interaction with AFG2B and CINP stretch occupies residues 1 to 237 (MSSKKNRKRL…SLELSLQLSQ (237 aa)). Over residues 11-25 (NQSAENGSSLPSAAS) the composition is skewed to polar residues. Position 272 is a phosphothreonine (Thr-272). Phosphoserine occurs at positions 274 and 279. ATP is bound by residues 394–401 (GPPGTGKT) and 668–675 (GPPGCSKT). Lys-859 is covalently cross-linked (Glycyl lysine isopeptide (Lys-Gly) (interchain with G-Cter in SUMO2)).

This sequence belongs to the AAA ATPase family. AFG2 subfamily. Part of the 55LCC heterohexameric ATPase complex composed at least of AIRIM, AFG2A, AFG2B and CINP. Associates with pre-60S ribosomal particles.

It localises to the cytoplasm. The protein localises to the mitochondrion. The protein resides in the cytoskeleton. Its subcellular location is the spindle. It carries out the reaction ATP + H2O = ADP + phosphate + H(+). AFG2A alone display limited ATPase activity and is not regulated by RNA or DNA binding. In the context of 55LCC heterohexameric ATPase complex, the ATPase activity increases and is stimulated by DNA binding and inhibited in presence of RNA. Functionally, ATP-dependent chaperone part of the 55LCC heterohexameric ATPase complex which is chromatin-associated and promotes replisome proteostasis to maintain replication fork progression and genome stability. Required for replication fork progression, sister chromatid cohesion, and chromosome stability. The ATPase activity is specifically enhanced by replication fork DNA and is coupled to cysteine protease-dependent cleavage of replisome substrates in response to replication fork damage. Uses ATPase activity to process replisome substrates in S-phase, facilitating their proteolytic turnover from chromatin to ensure DNA replication and mitotic fidelity. Plays an essential role in the cytoplasmic maturation steps of pre-60S ribosomal particles by promoting the release of shuttling protein RSL24D1/RLP24 from the pre-ribosomal particles. May be involved in morphological and functional mitochondrial transformations during spermatogenesis. This chain is ATPase family gene 2 protein homolog A, found in Homo sapiens (Human).